A 226-amino-acid polypeptide reads, in one-letter code: UPF0173 metal-dependent hydrolase GFO_2312 (226 aa).

Belongs to the UPF0173 family.

The chain is UPF0173 metal-dependent hydrolase GFO_2312 from Christiangramia forsetii (strain DSM 17595 / CGMCC 1.15422 / KT0803) (Gramella forsetii).